Consider the following 366-residue polypeptide: Chorismate synthase (366 aa).

2 residues coordinate NADP(+): arginine 48 and arginine 54. Residues 125–127 (RSS), 238–239 (NA), glycine 278, 293–297 (KPTSS), and arginine 319 each bind FMN.

It belongs to the chorismate synthase family. Homotetramer. It depends on FMNH2 as a cofactor.

The catalysed reaction is 5-O-(1-carboxyvinyl)-3-phosphoshikimate = chorismate + phosphate. It functions in the pathway metabolic intermediate biosynthesis; chorismate biosynthesis; chorismate from D-erythrose 4-phosphate and phosphoenolpyruvate: step 7/7. In terms of biological role, catalyzes the anti-1,4-elimination of the C-3 phosphate and the C-6 proR hydrogen from 5-enolpyruvylshikimate-3-phosphate (EPSP) to yield chorismate, which is the branch point compound that serves as the starting substrate for the three terminal pathways of aromatic amino acid biosynthesis. This reaction introduces a second double bond into the aromatic ring system. The protein is Chorismate synthase of Dechloromonas aromatica (strain RCB).